Reading from the N-terminus, the 78-residue chain is Toxin-like protein 10 (78 aa).

An N-terminal signal peptide occupies residues 1–23; that stretch reads MKATALLIAVFILFSVFGDMGYC.

Contains 4 disulfide bonds. In terms of tissue distribution, expressed by the venom gland.

Its subcellular location is the secreted. The polypeptide is Toxin-like protein 10 (Urodacus yaschenkoi (Inland robust scorpion)).